Consider the following 1557-residue polypeptide: MAGSCTIDEHNHFGPIVGDACYGGLDFTLYFEEAFLSIFPAATLILAATVRCFLVRSASLKVRGGWLHTLKLLLLAPYSISQLLLLAFWMRSGTPKTDLTIASTVLRFIATLPCGYLIHLQHHRSLRPSKIISIYFLLTLLFDIPLARTIWTIQGLRTVSAIFIAGTVVKALLLILETWEKRRLVRPMYASPAPEDWTGVINRSLFWWINPLLFRGARTSLSVGDLFHLESCMLPDPDGKHRVVMHWENVTNKDKAGAMVVPIAKAFKWDLLAGVFPRLCQSGFIISQPFLVRATVELFVYRDRPDSRSKATLLIGAYALVYGGIAIATATAQHKTYRVITMMRAALVDMIFEKSTAINAHKNDDSAALTLMSTDIERITHCGRYIHDTWASLIEIGIALYLLYNELDTAGIAPIIIAFGCTVTAMKIAMMAGERQNLWIEAIQKRVAITAEMLGSMKGVKISGLTDLLFNKIQALREHEILASQKFRSLLIAVVGLSNFNTLMTPIVSFTIYAMGSGDAPNEILGSARALTSLTLFNLFAVFIGTLVESISETAMALECLDRIRNYLAQEAHQDPREVNSSPVTEKTPCIEAFEVDVGWKNGDESILHRLSYRIERHSLTMIVGAVGCGKTTLVKAMLGEVNCLTGKMKVNCDRMAYCGQDAWLTNGSIRENILGGSPYDPPWYSTVVAACGLEKDFTELTAGDQTAVGSKGVSLSGGQKQRLGSLDVLTRAQALARALYSGVETILLDDALSGLDPVTDEHIFTQVLGPNGLARKQHLTVVMVTHAVHRLPYADHIIALNTDGTILVQGTFDDCCKRLDYIQGFAIAQPPAIQMKSAMPKAVEVTKAAPYSDEAISDARRSSDYQTYLYYLTTVPWHNWLVYFGLMAIFVFLQAFPTVWVTWWARDNDAQPNKNRSMRIGVYWMFGVLGACFLLATACFYMLKIVAKTASVIHSRLLRTVVNAPMSFFASTDSGTTLNRFSQDLELIDMELPLAVLQTCLALFLCVAQLIIIAVSARYITATIPLCVLVYCIIGTFYMRTSRQLRIMEIEAKSPLFSNFMELLNGLITIRAFNWAEQYKLRNRALLAESQRPYYLLYAVQRWLSLVLDMTVAGFVLVLMGIAVGTMHSTNASSLGLALVNVVSLSASVKALITDWTVLETSLGAVTRVKHFAESTESEDMVQERDLPPEDWTSRGTVEYKNVSAFYRDPSKPVLKNLSFRVHKGEKVAIVGRSGSGKSTLVSALFRMIELCEGTISVDGIDITTLRRQAIRSAIIGLPQDPLLLEGSTIRENVDPFDYCPDEAVINTLKRVGLWEILESKDGLETIASPELFSHGQKQLLCMAKAMLRHGNIIVFDEATSGVDPETDEMMQELIRSCFAQHTVLTVTHRLDTIIDYDRVLVMDNGILLESDPPRTLLSRPSVFRELYKSSRGWEEYERQERAEAEARRRERVEKERAEEELRGRRGLISEKEEPETVSAIREHWNVVNQLFGGIIPRAVPRTRSRSRDHSAERRESKRYSGGDWTGEGDGDGGDGGLGRRDTRRHLTGLAARGLH.

A run of 5 helical transmembrane segments spans residues 27-47, 70-90, 99-119, 131-151, and 159-179; these read FTLY…LILA, LKLL…AFWM, LTIA…YLIH, IISI…RTIW, and VSAI…LETW. 2 N-linked (GlcNAc...) asparagine glycosylation sites follow: Asn-202 and Asn-249. A run of 6 helical transmembrane segments spans residues 256 to 276, 311 to 331, 385 to 405, 412 to 432, 490 to 510, and 531 to 551; these read AGAM…AGVF, ATLL…ATAT, YIHD…LLYN, IAPI…AMMA, LLIA…IVSF, and LTSL…VESI. In terms of domain architecture, ABC transmembrane type-1 1 spans 279 to 556; it reads LCQSGFIISQ…LVESISETAM (278 aa). One can recognise an ABC transporter 1 domain in the interval 593 to 829; sequence AFEVDVGWKN…LDYIQGFAIA (237 aa). 625–632 contacts ATP; that stretch reads GAVGCGKT. The N-linked (GlcNAc...) asparagine glycan is linked to Asn-667. The chain crosses the membrane as a helical span at residues 882–902; sequence LVYFGLMAIFVFLQAFPTVWV. An ABC transmembrane type-1 2 domain is found at 882–1162; it reads LVYFGLMAIF…LITDWTVLET (281 aa). Residue Asn-916 is glycosylated (N-linked (GlcNAc...) asparagine). 4 consecutive transmembrane segments (helical) span residues 921 to 941, 996 to 1016, 1020 to 1040, and 1105 to 1125; these read IGVY…TACF, AVLQ…IIAV, YITA…TFYM, and LSLV…GIAV. An N-linked (GlcNAc...) asparagine glycan is attached at Asn-1132. A helical membrane pass occupies residues 1135-1155; the sequence is SLGLALVNVVSLSASVKALIT. Residues 1199–1431 enclose the ABC transporter 2 domain; sequence VEYKNVSAFY…PSVFRELYKS (233 aa). 2 N-linked (GlcNAc...) asparagine glycosylation sites follow: Asn-1203 and Asn-1218. 1233-1240 contacts ATP; the sequence is GRSGSGKS. Disordered stretches follow at residues 1439-1464 and 1503-1557; these read ERQE…EELR and RTRS…RGLH. Positions 1507–1522 are enriched in basic and acidic residues; that stretch reads RSRDHSAERRESKRYS.

The protein belongs to the ABC transporter superfamily. ABCC family. Conjugate transporter (TC 3.A.1.208) subfamily.

The protein resides in the cell membrane. Functionally, ABC transporter; part of the gene cluster that mediates the biosynthesis of aspercryptins, linear lipopeptides built from six amino acids including 2 highly unusual and nonproteogenic amino acids, 2-amino-octanoic acid (2aoa) and 2-amino-dodecanol (2adol). This Emericella nidulans (strain FGSC A4 / ATCC 38163 / CBS 112.46 / NRRL 194 / M139) (Aspergillus nidulans) protein is ABC transporter atnG.